The chain runs to 70 residues: Cytochrome c oxidase subunit 8B, mitochondrial (70 aa).

The transit peptide at 1–24 (MPRLPPILRLLQAPAKFTVVPKAH) directs the protein to the mitochondrion. Residues 25–38 (VSAKPAKTPTSAVE) lie on the Mitochondrial matrix side of the membrane. The helical transmembrane segment at 39–60 (QAVGISAIVVGFMVPAGWVLAH) threads the bilayer. Residues 61–70 (LESYKKSSAA) lie on the Mitochondrial intermembrane side of the membrane.

Belongs to the cytochrome c oxidase VIII family. Component of the cytochrome c oxidase (complex IV, CIV), a multisubunit enzyme composed of 14 subunits. The complex is composed of a catalytic core of 3 subunits MT-CO1, MT-CO2 and MT-CO3, encoded in the mitochondrial DNA, and 11 supernumerary subunits COX4I, COX5A, COX5B, COX6A, COX6B, COX6C, COX7A, COX7B, COX7C, COX8 and NDUFA4, which are encoded in the nuclear genome. The complex exists as a monomer or a dimer and forms supercomplexes (SCs) in the inner mitochondrial membrane with NADH-ubiquinone oxidoreductase (complex I, CI) and ubiquinol-cytochrome c oxidoreductase (cytochrome b-c1 complex, complex III, CIII), resulting in different assemblies (supercomplex SCI(1)III(2)IV(1) and megacomplex MCI(2)III(2)IV(2)).

Its subcellular location is the mitochondrion inner membrane. It functions in the pathway energy metabolism; oxidative phosphorylation. Its function is as follows. Component of the cytochrome c oxidase, the last enzyme in the mitochondrial electron transport chain which drives oxidative phosphorylation. The respiratory chain contains 3 multisubunit complexes succinate dehydrogenase (complex II, CII), ubiquinol-cytochrome c oxidoreductase (cytochrome b-c1 complex, complex III, CIII) and cytochrome c oxidase (complex IV, CIV), that cooperate to transfer electrons derived from NADH and succinate to molecular oxygen, creating an electrochemical gradient over the inner membrane that drives transmembrane transport and the ATP synthase. Cytochrome c oxidase is the component of the respiratory chain that catalyzes the reduction of oxygen to water. Electrons originating from reduced cytochrome c in the intermembrane space (IMS) are transferred via the dinuclear copper A center (CU(A)) of subunit 2 and heme A of subunit 1 to the active site in subunit 1, a binuclear center (BNC) formed by heme A3 and copper B (CU(B)). The BNC reduces molecular oxygen to 2 water molecules using 4 electrons from cytochrome c in the IMS and 4 protons from the mitochondrial matrix. The polypeptide is Cytochrome c oxidase subunit 8B, mitochondrial (Cox8b) (Mus musculus (Mouse)).